Here is a 1088-residue protein sequence, read N- to C-terminus: Extended synaptotagmin-1 (1088 aa).

At Met1 the chain carries N-acetylmethionine. Topologically, residues 1-30 are cytoplasmic; the sequence is MERSPEEGAGPEPSGQSPATDSTRERDGGS. The interval 1 to 38 is disordered; the sequence is MERSPEEGAGPEPSGQSPATDSTRERDGGSGVPPAGPG. A helical membrane pass occupies residues 31-51; the sequence is GVPPAGPGAASEALAVLTSFG. Over 52–54 the chain is Lumenal; the sequence is RRL. The chain crosses the membrane as a helical span at residues 55–75; that stretch reads LVLVPVYLAGAAGLSVGFVLF. Residues 76-1088 are Cytoplasmic-facing; that stretch reads GLALYLGWRR…LIDDRDKGGS (1013 aa). Residues 127 to 305 form the SMP-LTD domain; sequence DVEKAEWLNK…LPNRLLVPLV (179 aa). C2 domains are found at residues 304-425, 446-572, 618-740, and 771-888; these read LVPD…DNWY, DAEK…QLSS, DAPP…DEWL, and QVNS…ALSG. Ser316 bears the Phosphoserine; by CDK5 mark. Ca(2+) is bound by residues Lys336, Asp337, Asp349, Asp396, Asp398, Asp400, Asp402, and Asp403. The tract at residues 599–630 is disordered; it reads TEPGAQDWDSESPETGSSVDAPPRPYHTTPNS. The residue at position 806 (Lys806) is an N6-acetyllysine. Position 809 is a phosphoserine (Ser809). The disordered stretch occupies residues 911–930; it reads HSHSSSSLNEEPEVLGDPTH. A phosphoserine mark is found at Ser933 and Ser947. The C2 5 domain occupies 955–1077; it reads PLGQVKLTVW…DLSQGAAQWY (123 aa). Residue Tyr993 is modified to Phosphotyrosine. Residues 1002 to 1009 form a required for phosphatidylinositol 4,5-bisphosphate-dependent location at the cell membrane region; the sequence is KNRGTKRK.

This sequence belongs to the extended synaptotagmin family. Interacts with ESYT2 and ESYT3. Interacts with ADGRD1; inhibiting the G-protein-coupled receptor activity of ADGRD1. Interaction with ADGRD1 is abolished when cytosolic calcium increases, relieving ADGRD1 G-protein-coupled receptor activity. Interacts (phosphorylated form) with SLC2A4. Post-translationally, phosphorylated on Ser residues in insulin-treated adipocytes (in vitro); this promotes interaction with SLC2A4. Ubiquitously expressed with a higher expression in spleen and white adipose tissue.

Its subcellular location is the endoplasmic reticulum membrane. The protein resides in the cell membrane. Functionally, binds calcium (via the C2 domains) and translocates to sites of contact between the endoplasmic reticulum and the cell membrane in response to increased cytosolic calcium levels. Helps tether the endoplasmic reticulum to the cell membrane and promotes the formation of appositions between the endoplasmic reticulum and the cell membrane. Acts as an inhibitor of ADGRD1 G-protein-coupled receptor activity in absence of cytosolic calcium. Binds glycerophospholipids in a barrel-like domain and may play a role in cellular lipid transport. This chain is Extended synaptotagmin-1 (Esyt1), found in Rattus norvegicus (Rat).